Reading from the N-terminus, the 753-residue chain is Nuclear hormone receptor family member daf-12 (753 aa).

A disordered region spans residues 1 to 109 (MGTNGGVIAE…PDDGLLDSSE (109 aa)). A compositionally biased stretch (basic and acidic residues) spans 20 to 29 (NPDKVEEPVV). Positions 30-44 (RRKRVTRRRHRRIHS) are enriched in basic residues. Positions 115–190 (QKTCRVCGDH…VGMKKEWILN (76 aa)) form a DNA-binding region, nuclear receptor. NR C4-type zinc fingers lie at residues 118–138 (CRVC…CESC) and 154–173 (CPYS…CQKC). The short motif at 191 to 206 (EEQLRRRKNSRLNNTG) is the Nuclear localization signal element. Disordered regions lie at residues 198 to 251 (KNSR…TINP), 266 to 314 (NAMP…GYDP), and 376 to 410 (GHPM…EKNH). The segment covering 201–211 (RLNNTGTCNKR) has biased composition (polar residues). Residues 212-227 (SQPGNQQSPQGPNQQP) are compositionally biased toward low complexity. Polar residues-rich tracts occupy residues 285-301 (PVGS…SLTM) and 394-410 (MSLS…EKNH). The NR LBD domain occupies 516–753 (AELKALDAVR…ELPGEFFKIK (238 aa)).

It belongs to the nuclear hormone receptor family. In terms of assembly, interacts with din-1 isoform d. In terms of tissue distribution, expressed throughout muscles of the pharynx. Expressed in epidermal seam cells, the vulva, head neurons, mature spermatheca, uterus and intestine.

The protein localises to the nucleus. Nuclear receptor which binds directly to response elements in target gene promoters. Activity is modulated by binding of steroid hormone ligands that include dafachronic acids. Regulates expression of genes involved in postembryonic development and the dauer diapause, in response to environmental cues. Inhibits the expression of let-7 family members when bound to corepressor din-1s which is an isoform of din-1. Plays a role in controlling the timing of seam cell development during the larval stages. Has a role in the immune response to bacterial infection, via regulation of let-7 miRNAs. Controls expression of genes that promote the aerobic catabolism of fatty acids for reproductive growth. May be involved in thermotolerance. The chain is Nuclear hormone receptor family member daf-12 from Caenorhabditis elegans.